A 105-amino-acid chain; its full sequence is Met repressor (105 aa).

Belongs to the MetJ family. As to quaternary structure, homodimer.

The protein resides in the cytoplasm. Functionally, this regulatory protein, when combined with SAM (S-adenosylmethionine) represses the expression of the methionine regulon and of enzymes involved in SAM synthesis. In Photorhabdus laumondii subsp. laumondii (strain DSM 15139 / CIP 105565 / TT01) (Photorhabdus luminescens subsp. laumondii), this protein is Met repressor.